Consider the following 417-residue polypeptide: uncharacterized protein (417 aa).

2 disordered regions span residues 1–41 (MDSE…EDQA) and 233–262 (QDSA…STRS). The span at 31–41 (DEDHIFHEDQA) shows a compositional bias: basic and acidic residues. Residues 235-245 (SAYNDQAPSTS) show a composition bias toward polar residues.

This is an uncharacterized protein from Caenorhabditis elegans.